Reading from the N-terminus, the 328-residue chain is Tetraacyldisaccharide 4'-kinase (328 aa).

Position 55–62 (55–62) interacts with ATP; that stretch reads TVGGNGKT.

This sequence belongs to the LpxK family.

The catalysed reaction is a lipid A disaccharide + ATP = a lipid IVA + ADP + H(+). It functions in the pathway glycolipid biosynthesis; lipid IV(A) biosynthesis; lipid IV(A) from (3R)-3-hydroxytetradecanoyl-[acyl-carrier-protein] and UDP-N-acetyl-alpha-D-glucosamine: step 6/6. Transfers the gamma-phosphate of ATP to the 4'-position of a tetraacyldisaccharide 1-phosphate intermediate (termed DS-1-P) to form tetraacyldisaccharide 1,4'-bis-phosphate (lipid IVA). In Hamiltonella defensa subsp. Acyrthosiphon pisum (strain 5AT), this protein is Tetraacyldisaccharide 4'-kinase.